An 87-amino-acid chain; its full sequence is Sec-independent protein translocase protein TatA (87 aa).

Residues 1-21 (MGGMSITHWIVVAVVVMIFFG) traverse the membrane as a helical segment. Residues 40 to 87 (KKGMSEDDTTPPAAPPAPAPRLENQPLPPENTTQNVAQNVPNDIKNNQ) are disordered. Polar residues predominate over residues 69–87 (ENTTQNVAQNVPNDIKNNQ).

This sequence belongs to the TatA/E family. The Tat system comprises two distinct complexes: a TatABC complex, containing multiple copies of TatA, TatB and TatC subunits, and a separate TatA complex, containing only TatA subunits. Substrates initially bind to the TatABC complex, which probably triggers association of the separate TatA complex to form the active translocon.

It is found in the cell inner membrane. In terms of biological role, part of the twin-arginine translocation (Tat) system that transports large folded proteins containing a characteristic twin-arginine motif in their signal peptide across membranes. TatA could form the protein-conducting channel of the Tat system. The sequence is that of Sec-independent protein translocase protein TatA from Zymomonas mobilis subsp. mobilis (strain ATCC 31821 / ZM4 / CP4).